Here is a 637-residue protein sequence, read N- to C-terminus: Chaperone protein DnaK (637 aa).

Thr-198 carries the phosphothreonine; by autocatalysis modification. The tract at residues Met-597–Lys-637 is disordered. Polar residues predominate over residues Gln-600–Gly-610. Residues Gln-620–Phe-629 show a composition bias toward acidic residues.

The protein belongs to the heat shock protein 70 family.

In terms of biological role, acts as a chaperone. The polypeptide is Chaperone protein DnaK (Desulforapulum autotrophicum (strain ATCC 43914 / DSM 3382 / VKM B-1955 / HRM2) (Desulfobacterium autotrophicum)).